A 249-amino-acid chain; its full sequence is Exosome complex component Rrp41 (249 aa).

This sequence belongs to the RNase PH family. Rrp41 subfamily. In terms of assembly, component of the archaeal exosome complex. Forms a hexameric ring-like arrangement composed of 3 Rrp41-Rrp42 heterodimers. The hexameric ring associates with a trimer of Rrp4 and/or Csl4 subunits.

The protein localises to the cytoplasm. Its function is as follows. Catalytic component of the exosome, which is a complex involved in RNA degradation. Has 3'-&gt;5' exoribonuclease activity. Can also synthesize heteromeric RNA-tails. In Thermococcus onnurineus (strain NA1), this protein is Exosome complex component Rrp41.